The following is a 588-amino-acid chain: Vicilin C72 (588 aa).

The signal sequence occupies residues 1-25; the sequence is MVRNKSACVVLLFSLFLSFGLLCSA. Disordered stretches follow at residues 159–183 and 460–487; these read RERE…NPFH and PRQS…GQYR. Positions 163-175 are enriched in acidic residues; sequence EEAEEEETEEGEQ. 2 Cupin type-1 domains span residues 182–340 and 386–566; these read FHFH…EQLD and FNLL…RLVD. The segment covering 465–478 has biased composition (acidic residues); sequence FEEEEEQQQEQEQE.

This sequence belongs to the 7S seed storage protein family.

Its subcellular location is the vacuole. The protein resides in the aleurone grain. Functionally, seed storage protein. The protein is Vicilin C72 of Gossypium hirsutum (Upland cotton).